The following is a 378-amino-acid chain: Acetylornithine deacetylase (378 aa).

Residue His-76 coordinates Zn(2+). The active site involves Asp-78. Asp-108 is a Zn(2+) binding site. Residue Glu-140 is part of the active site. The Zn(2+) site is built by Glu-141, Glu-165, and His-351.

The protein belongs to the peptidase M20A family. ArgE subfamily. Homodimer. Requires Zn(2+) as cofactor. It depends on Co(2+) as a cofactor. The cofactor is glutathione.

Its subcellular location is the cytoplasm. It catalyses the reaction N(2)-acetyl-L-ornithine + H2O = L-ornithine + acetate. Its pathway is amino-acid biosynthesis; L-arginine biosynthesis; L-ornithine from N(2)-acetyl-L-ornithine (linear): step 1/1. In terms of biological role, catalyzes the hydrolysis of the amide bond of N(2)-acetylated L-amino acids. Cleaves the acetyl group from N-acetyl-L-ornithine to form L-ornithine, an intermediate in L-arginine biosynthesis pathway, and a branchpoint in the synthesis of polyamines. This chain is Acetylornithine deacetylase, found in Aliivibrio fischeri (strain MJ11) (Vibrio fischeri).